Consider the following 98-residue polypeptide: NADH-ubiquinone oxidoreductase chain 4L (98 aa).

3 helical membrane passes run 1 to 21 (MTAIYLNLTMAFSLALMGVLV), 29 to 49 (TLLCLEGMMLSLFILMTLLIT), and 59 to 79 (LPLTLLVFSACEAAIGLALLV).

Belongs to the complex I subunit 4L family. Core subunit of respiratory chain NADH dehydrogenase (Complex I) which is composed of 45 different subunits.

It localises to the mitochondrion inner membrane. It catalyses the reaction a ubiquinone + NADH + 5 H(+)(in) = a ubiquinol + NAD(+) + 4 H(+)(out). Functionally, core subunit of the mitochondrial membrane respiratory chain NADH dehydrogenase (Complex I) which catalyzes electron transfer from NADH through the respiratory chain, using ubiquinone as an electron acceptor. Part of the enzyme membrane arm which is embedded in the lipid bilayer and involved in proton translocation. This is NADH-ubiquinone oxidoreductase chain 4L (MT-ND4L) from Notoryctes typhlops (Southern marsupial mole).